A 351-amino-acid polypeptide reads, in one-letter code: MINHKQSLKDLTLNELQEYFSRKGWQQFRAKQIFDWMYIQQVDSIEVMSNIPKKLRQELMENCTINDLELDSNNIYTSPTDGTIKFLSVLKDGIGVETTIMKYDYGNTVCISSQAGCNMNCVFCASTTGGKERDLSPGEMIDQVLMANKVLPGSESINNIVVMGSGEPLENYQHLIKFLKIVNDGKGLNIGMRHITVSTCGLVPEIYNLAEEELQLNLAISLHAPNDELRNKLIPLNKIYPIHELLEACQVYFQKTGRRITFEYVLIKDFNDSIDLAKELSETLTALKMPVHVNLIPFNPVEETKFTAPPSSRISDFKNNLQSNNIGVTVRKERGVDVDGACGQLRSKVMR.

The active-site Proton acceptor is Glu-97. In terms of domain architecture, Radical SAM core spans 103–337; sequence YDYGNTVCIS…VTVRKERGVD (235 aa). A disulfide bridge connects residues Cys-110 and Cys-342. Cys-117, Cys-121, and Cys-124 together coordinate [4Fe-4S] cluster. S-adenosyl-L-methionine is bound by residues 166 to 167, Ser-198, 221 to 223, and Asn-299; these read GE and SLH. Cys-342 functions as the S-methylcysteine intermediate in the catalytic mechanism.

Belongs to the radical SAM superfamily. RlmN family. It depends on [4Fe-4S] cluster as a cofactor.

Its subcellular location is the cytoplasm. It carries out the reaction adenosine(2503) in 23S rRNA + 2 reduced [2Fe-2S]-[ferredoxin] + 2 S-adenosyl-L-methionine = 2-methyladenosine(2503) in 23S rRNA + 5'-deoxyadenosine + L-methionine + 2 oxidized [2Fe-2S]-[ferredoxin] + S-adenosyl-L-homocysteine. The catalysed reaction is adenosine(37) in tRNA + 2 reduced [2Fe-2S]-[ferredoxin] + 2 S-adenosyl-L-methionine = 2-methyladenosine(37) in tRNA + 5'-deoxyadenosine + L-methionine + 2 oxidized [2Fe-2S]-[ferredoxin] + S-adenosyl-L-homocysteine. In terms of biological role, specifically methylates position 2 of adenine 2503 in 23S rRNA and position 2 of adenine 37 in tRNAs. The sequence is that of Probable dual-specificity RNA methyltransferase RlmN from Natranaerobius thermophilus (strain ATCC BAA-1301 / DSM 18059 / JW/NM-WN-LF).